The following is a 515-amino-acid chain: Bifunctional purine biosynthesis protein PurH (515 aa).

Residues 1-145 enclose the MGS-like domain; sequence MTKRALISVS…KNHASVTVVV (145 aa).

Belongs to the PurH family.

The enzyme catalyses (6R)-10-formyltetrahydrofolate + 5-amino-1-(5-phospho-beta-D-ribosyl)imidazole-4-carboxamide = 5-formamido-1-(5-phospho-D-ribosyl)imidazole-4-carboxamide + (6S)-5,6,7,8-tetrahydrofolate. It carries out the reaction IMP + H2O = 5-formamido-1-(5-phospho-D-ribosyl)imidazole-4-carboxamide. The protein operates within purine metabolism; IMP biosynthesis via de novo pathway; 5-formamido-1-(5-phospho-D-ribosyl)imidazole-4-carboxamide from 5-amino-1-(5-phospho-D-ribosyl)imidazole-4-carboxamide (10-formyl THF route): step 1/1. Its pathway is purine metabolism; IMP biosynthesis via de novo pathway; IMP from 5-formamido-1-(5-phospho-D-ribosyl)imidazole-4-carboxamide: step 1/1. The chain is Bifunctional purine biosynthesis protein PurH from Streptococcus thermophilus (strain ATCC BAA-491 / LMD-9).